Reading from the N-terminus, the 508-residue chain is Serine/threonine-protein kinase VRK2 (508 aa).

In terms of domain architecture, Protein kinase spans 29-319 (WVLGKKIGSG…KKILNPHGIP (291 aa)). ATP is bound by residues 35-43 (IGSGGFGLI) and Lys61. Asp166 serves as the catalytic Proton acceptor. Thr336 carries the post-translational modification Phosphothreonine. The segment at 397 to 508 (TRRRQKYQES…MLVFLALFFL (112 aa)) is interaction with MAP3K7. Phosphoserine is present on Ser406. Residues 487-507 (VYYYRIIIPVLLMLVFLALFF) traverse the membrane as a helical; Anchor for type IV membrane protein segment.

Belongs to the protein kinase superfamily. CK1 Ser/Thr protein kinase family. VRK subfamily. In terms of assembly, isoform 1 interacts with MAP3K7, MAP2K7, MAP2K1 and KSR1. Isoform 1 and isoform 2 interact with RAN and MAPK8IP1. (Microbial infection) Isoform 1 interacts with Epstein-Barr virus BHRF1; this interaction is involved in protecting cells from apoptosis. As to quaternary structure, (Microbial infection) Isoform 1 interacts with vaccinia protein B12. Post-translationally, autophosphorylated. Isoform 1 and isoform 2 are expressed in various tumor cell lines. Expression of isoform 1 inversely correlates with ERBB2 in breast carcinomas (at protein level). Widely expressed. Highly expressed in fetal liver, skeletal muscle, pancreas, heart, peripheral blood leukocytes and testis.

The protein resides in the cytoplasm. It is found in the endoplasmic reticulum membrane. It localises to the mitochondrion membrane. Its subcellular location is the nucleus envelope. The protein localises to the nucleus. The catalysed reaction is L-seryl-[protein] + ATP = O-phospho-L-seryl-[protein] + ADP + H(+). The enzyme catalyses L-threonyl-[protein] + ATP = O-phospho-L-threonyl-[protein] + ADP + H(+). With respect to regulation, RAN inhibits its autophosphorylation and its ability to phosphorylate histone H3. Functionally, serine/threonine kinase that regulates several signal transduction pathways. Isoform 1 modulates the stress response to hypoxia and cytokines, such as interleukin-1 beta (IL1B) and this is dependent on its interaction with MAPK8IP1, which assembles mitogen-activated protein kinase (MAPK) complexes. Inhibition of signal transmission mediated by the assembly of MAPK8IP1-MAPK complexes reduces JNK phosphorylation and JUN-dependent transcription. Phosphorylates 'Thr-18' of p53/TP53, histone H3, and may also phosphorylate MAPK8IP1. Phosphorylates BANF1 and disrupts its ability to bind DNA and reduces its binding to LEM domain-containing proteins. Down-regulates the transactivation of transcription induced by ERBB2, HRAS, BRAF, and MEK1. Blocks the phosphorylation of ERK in response to ERBB2 and HRAS. Can also phosphorylate the following substrates that are commonly used to establish in vitro kinase activity: casein, MBP and histone H2B, but it is not sure that this is physiologically relevant. Its function is as follows. Phosphorylates 'Thr-18' of p53/TP53, as well as histone H3. Reduces p53/TP53 ubiquitination by MDM2, promotes p53/TP53 acetylation by EP300 and thereby increases p53/TP53 stability and activity. The sequence is that of Serine/threonine-protein kinase VRK2 (VRK2) from Homo sapiens (Human).